The sequence spans 823 residues: Adhesion G protein-coupled receptor E2 (823 aa).

A signal peptide spans Met1–Thr23. Residues Gln24–Thr540 are Extracellular-facing. In terms of domain architecture, EGF-like 1 spans Asp25–Asp66. 15 disulfide bridges follow: Cys29/Cys39, Cys33/Cys45, Cys47/Cys65, Cys71/Cys85, Cys79/Cys94, Cys96/Cys117, Cys123/Cys136, Cys130/Cys145, Cys147/Cys161, Cys167/Cys180, Cys174/Cys189, Cys191/Cys210, Cys216/Cys229, Cys223/Cys238, and Cys240/Cys259. A glycan (N-linked (GlcNAc...) asparagine) is linked at Asn41. Positions Asp67 to Gln118 constitute an EGF-like 2; calcium-binding domain. Asn111 carries an N-linked (GlcNAc...) asparagine glycan. The 44-residue stretch at Asp119–Thr162 folds into the EGF-like 3; calcium-binding domain. Positions Asp163 to Glu211 constitute an EGF-like 4; calcium-binding domain. Residue Asn206 is glycosylated (N-linked (GlcNAc...) asparagine). The region spanning Asp212 to Glu260 is the EGF-like 5; calcium-binding domain. Residues Asn298, Asn347, Asn354, Asn456, and Asn460 are each glycosylated (N-linked (GlcNAc...) asparagine). Residues Asn354–Gln530 form the GAIN-B domain. Cystine bridges form between Cys482–Cys512 and Cys500–Cys514. The interval Cys482–Gln530 is GPS. A helical transmembrane segment spans residues Tyr541–Cys561. Topologically, residues Lys562–Thr569 are cytoplasmic. Residues Ser570–Ile590 form a helical membrane-spanning segment. Over Asp591–Thr605 the chain is Extracellular. A helical membrane pass occupies residues Leu606–Leu626. At Thr627–Lys644 the chain is on the cytoplasmic side. Residues Lys645–Ser665 form a helical membrane-spanning segment. Over Arg666 to Gly683 the chain is Extracellular. The helical transmembrane segment at Phe684–Leu704 threads the bilayer. The Cytoplasmic segment spans residues Val705–Thr735. A helical membrane pass occupies residues Ala736 to Ala756. At Arg757–Ala760 the chain is on the extracellular side. The chain crosses the membrane as a helical span at residues Tyr761–Leu781. The Cytoplasmic segment spans residues Ser782–Asn823.

It belongs to the G-protein coupled receptor 2 family. Adhesion G-protein coupled receptor (ADGR) subfamily. As to quaternary structure, forms a heterodimer, consisting of a large extracellular region non-covalently linked to a seven-transmembrane moiety. Interacts with chondroitin sulfate; the interaction with chondroitin sulfate is calcium-dependent. Interacts with CD55. Autoproteolytically cleaved into 2 subunits, an extracellular alpha subunit and a seven-transmembrane beta subunit. Expression is restricted to myeloid cells. Highest expression was found in peripheral blood leukocytes, followed by spleen and lymph nodes, with intermediate to low levels in thymus, bone marrow, fetal liver, placenta, and lung, and no expression in heart, brain, skeletal muscle, kidney, or pancreas. Expression is also detected in monocyte/macrophage and Jurkat cell lines but not in other cell lines tested. High expression in mast cells.

It is found in the cell membrane. The protein localises to the cell projection. Its subcellular location is the ruffle membrane. Its function is as follows. Cell surface receptor that binds to the chondroitin sulfate moiety of glycosaminoglycan chains and promotes cell attachment. Promotes granulocyte chemotaxis, degranulation and adhesion. In macrophages, promotes the release of inflammatory cytokines, including IL8 and TNF. Signals probably through G-proteins. Is a regulator of mast cell degranulation. This Homo sapiens (Human) protein is Adhesion G protein-coupled receptor E2.